A 137-amino-acid chain; its full sequence is MSYVNRHLIHQINQSARLIAKKANEQLEPFGLYSSQWSVLYCLRTIGPMTQKEIWSYLNVEAPTVTRTIKRLEENGWVQRRQGEDKREKLVVLTKEAEKKYEEINVKMLKFEEELLADFRDEDKEAFSHLFRMFLQQ.

In terms of domain architecture, HTH marR-type spans Asn5–Gln136. A DNA-binding region (H-T-H motif) is located at residues Gln51 to Glu74.

This is an uncharacterized protein from Bacillus subtilis (strain 168).